The following is a 274-amino-acid chain: Formamidopyrimidine-DNA glycosylase (274 aa).

Proline 2 (schiff-base intermediate with DNA) is an active-site residue. The Proton donor role is filled by glutamate 3. Residue lysine 58 is the Proton donor; for beta-elimination activity of the active site. Residues histidine 91, arginine 110, and lysine 152 each coordinate DNA. An FPG-type zinc finger spans residues 237 to 271 (KVYGRKNLPCLVCENKIETVVIAGRHSAFCPHCQP). The active-site Proton donor; for delta-elimination activity is arginine 261.

Belongs to the FPG family. In terms of assembly, monomer. Zn(2+) is required as a cofactor.

The catalysed reaction is Hydrolysis of DNA containing ring-opened 7-methylguanine residues, releasing 2,6-diamino-4-hydroxy-5-(N-methyl)formamidopyrimidine.. It carries out the reaction 2'-deoxyribonucleotide-(2'-deoxyribose 5'-phosphate)-2'-deoxyribonucleotide-DNA = a 3'-end 2'-deoxyribonucleotide-(2,3-dehydro-2,3-deoxyribose 5'-phosphate)-DNA + a 5'-end 5'-phospho-2'-deoxyribonucleoside-DNA + H(+). Functionally, involved in base excision repair of DNA damaged by oxidation or by mutagenic agents. Acts as a DNA glycosylase that recognizes and removes damaged bases. Has a preference for oxidized purines, such as 7,8-dihydro-8-oxoguanine (8-oxoG). Has AP (apurinic/apyrimidinic) lyase activity and introduces nicks in the DNA strand. Cleaves the DNA backbone by beta-delta elimination to generate a single-strand break at the site of the removed base with both 3'- and 5'-phosphates. This Legionella pneumophila subsp. pneumophila (strain Philadelphia 1 / ATCC 33152 / DSM 7513) protein is Formamidopyrimidine-DNA glycosylase.